A 408-amino-acid chain; its full sequence is Adenylosuccinate synthetase (408 aa).

Residues 12 to 18 (GDEGKGK) and 40 to 42 (GHT) each bind GTP. The Proton acceptor role is filled by D13. Mg(2+) contacts are provided by D13 and G40. Residues 13-16 (DEGK), 38-41 (NAGH), T121, R135, Q213, T228, and R292 each bind IMP. H41 functions as the Proton donor in the catalytic mechanism. 288-294 (TTTGRPR) provides a ligand contact to substrate. GTP-binding positions include R294, 320 to 322 (KLD), and 393 to 395 (STS).

Belongs to the adenylosuccinate synthetase family. In terms of assembly, homodimer. Mg(2+) is required as a cofactor.

Its subcellular location is the cytoplasm. The enzyme catalyses IMP + L-aspartate + GTP = N(6)-(1,2-dicarboxyethyl)-AMP + GDP + phosphate + 2 H(+). It functions in the pathway purine metabolism; AMP biosynthesis via de novo pathway; AMP from IMP: step 1/2. Functionally, plays an important role in the de novo pathway of purine nucleotide biosynthesis. Catalyzes the first committed step in the biosynthesis of AMP from IMP. This Thermus thermophilus (strain ATCC BAA-163 / DSM 7039 / HB27) protein is Adenylosuccinate synthetase.